The following is a 423-amino-acid chain: MKVDVLLGLQWGDEGKGKVVDVLTPRYDVVARFQGGPNAGHTLEFEGQKYVLRSIPSGIFQGNKVNIIGNGVVLDPALFKAEAEALEASGHPLKERLHISKKAHLILPTHRILDAAYEAAKGDAKVGTTGKGIGPTYTDKVSRNGVRVGDILHNFEEVYGKAKARHEQILKSLNYEYDITELEKQWLEGIEYLKQFHLVDSEHEINNLLKSGKSVLCEGAQGTMLDVDFGSYPFVTSSNTICAGACTGLGIGPNKIGNVYGIMKAYCTRVGAGPFPTELFDETGKKIRDLGHEYGAVTGRERRCGWIDLVALKYSIMVNGVTQLIMMKSDVLDDFETIKACVAYKVNGEEIDYFPYDISEGLEPVYAELPGWKTDMTKMTSEDEFPEEFNAYVTFLEEQLETPIKIVSVGPDRGQTIERYTEE.

Residues 12–18 (GDEGKGK) and 40–42 (GHT) each bind GTP. Catalysis depends on Asp13, which acts as the Proton acceptor. 2 residues coordinate Mg(2+): Asp13 and Gly40. IMP-binding positions include 13 to 16 (DEGK), 38 to 41 (NAGH), Thr129, Arg143, Gln221, Thr236, and Arg300. The active-site Proton donor is His41. 296-302 (AVTGRER) is a binding site for substrate. GTP is bound by residues Arg302, 328 to 330 (KSD), and 408 to 410 (SVG).

This sequence belongs to the adenylosuccinate synthetase family. As to quaternary structure, homodimer. Mg(2+) serves as cofactor.

Its subcellular location is the cytoplasm. The enzyme catalyses IMP + L-aspartate + GTP = N(6)-(1,2-dicarboxyethyl)-AMP + GDP + phosphate + 2 H(+). It functions in the pathway purine metabolism; AMP biosynthesis via de novo pathway; AMP from IMP: step 1/2. In terms of biological role, plays an important role in the de novo pathway of purine nucleotide biosynthesis. Catalyzes the first committed step in the biosynthesis of AMP from IMP. The protein is Adenylosuccinate synthetase of Phocaeicola vulgatus (strain ATCC 8482 / DSM 1447 / JCM 5826 / CCUG 4940 / NBRC 14291 / NCTC 11154) (Bacteroides vulgatus).